The sequence spans 235 residues: Ubiquinone/menaquinone biosynthesis C-methyltransferase UbiE (235 aa).

Residues threonine 60, aspartate 80, 106–107, and serine 123 each bind S-adenosyl-L-methionine; that span reads DV.

The protein belongs to the class I-like SAM-binding methyltransferase superfamily. MenG/UbiE family.

The catalysed reaction is a 2-demethylmenaquinol + S-adenosyl-L-methionine = a menaquinol + S-adenosyl-L-homocysteine + H(+). It catalyses the reaction a 2-methoxy-6-(all-trans-polyprenyl)benzene-1,4-diol + S-adenosyl-L-methionine = a 5-methoxy-2-methyl-3-(all-trans-polyprenyl)benzene-1,4-diol + S-adenosyl-L-homocysteine + H(+). The protein operates within quinol/quinone metabolism; menaquinone biosynthesis; menaquinol from 1,4-dihydroxy-2-naphthoate: step 2/2. It participates in cofactor biosynthesis; ubiquinone biosynthesis. Functionally, methyltransferase required for the conversion of demethylmenaquinol (DMKH2) to menaquinol (MKH2) and the conversion of 2-polyprenyl-6-methoxy-1,4-benzoquinol (DDMQH2) to 2-polyprenyl-3-methyl-6-methoxy-1,4-benzoquinol (DMQH2). This Bdellovibrio bacteriovorus (strain ATCC 15356 / DSM 50701 / NCIMB 9529 / HD100) protein is Ubiquinone/menaquinone biosynthesis C-methyltransferase UbiE.